Consider the following 177-residue polypeptide: Protein BROTHER of FT and TFL 1 (177 aa).

It belongs to the phosphatidylethanolamine-binding protein family.

It is found in the cytoplasm. Functionally, may form complexes with phosphorylated ligands by interfering with kinases and their effectors. The chain is Protein BROTHER of FT and TFL 1 (BFT) from Arabidopsis thaliana (Mouse-ear cress).